We begin with the raw amino-acid sequence, 263 residues long: Type III pantothenate kinase (263 aa).

Residue 6-13 (DVGNTRIK) participates in ATP binding. Residues Y92 and 99–102 (GTDR) each bind substrate. The Proton acceptor role is filled by D101. T124 contacts ATP. Position 174 (T174) interacts with substrate.

The protein belongs to the type III pantothenate kinase family. As to quaternary structure, homodimer. NH4(+) serves as cofactor. The cofactor is K(+).

Its subcellular location is the cytoplasm. It catalyses the reaction (R)-pantothenate + ATP = (R)-4'-phosphopantothenate + ADP + H(+). Its pathway is cofactor biosynthesis; coenzyme A biosynthesis; CoA from (R)-pantothenate: step 1/5. Functionally, catalyzes the phosphorylation of pantothenate (Pan), the first step in CoA biosynthesis. The protein is Type III pantothenate kinase of Azoarcus sp. (strain BH72).